Reading from the N-terminus, the 609-residue chain is Oxidoreductase tpcJ (609 aa).

A signal peptide spans 1–16 (MITVIKWLVSGCCALA). 7 N-linked (GlcNAc...) asparagine glycosylation sites follow: N63, N107, N113, N240, N283, N471, and N601. Plastocyanin-like domains lie at 66–186 (VSQQ…HGPS), 196–351 (PWLL…RYDE), and 429–567 (VDWK…EQPK).

Belongs to the multicopper oxidase family. As to expression, specifically expressed in conidia.

It functions in the pathway secondary metabolite biosynthesis. Oxidoreductase; part of the gene cluster that mediates the biosynthesis of trypacidin, a mycotoxin with antiprotozoal activity and that plays a role in the infection process. The pathway begins with the synthesis of atrochrysone thioester by the polyketide synthase (PKS) tpcC. The atrochrysone carboxyl ACP thioesterase tpcB then breaks the thioester bond and releases the atrochrysone carboxylic acid from tpcC. The decarboxylase tpcK converts atrochrysone carboxylic acid to atrochrysone which is further reduced into emodin anthrone. The next step is performed by the emodin anthrone oxygenase tpcL that catalyzes the oxidation of emodinanthrone to emodin. Emodin O-methyltransferase encoded by tpcA catalyzes methylation of the 8-hydroxy group of emodin to form questin. Ring cleavage of questin by questin oxidase tpcI leads to desmethylsulochrin via several intermediates including questin epoxide. Another methylation step catalyzed by tpcM leads to the formation of sulochrin which is further converted to monomethylsulfochrin by tpcH. Finally, the tpcJ catalyzes the conversion of monomethylsulfochrin to trypacidin. Trypacidin is toxic for human pulmonary and bronchial epithelial cells by initiating the intracellular formation of nitric oxide (NO) and hydrogen peroxide (H(2)O(2)), thus triggering host necrotic cell death. The trypacidin pathway is also able to produce endocrocin via a distinct route from the endocrocin Enc pathway. This Aspergillus fumigatus (strain ATCC MYA-4609 / CBS 101355 / FGSC A1100 / Af293) (Neosartorya fumigata) protein is Oxidoreductase tpcJ.